A 422-amino-acid chain; its full sequence is UPF0229 protein SO_2883 (422 aa).

The segment at S60–N111 is disordered. Over residues G70–R90 the composition is skewed to basic and acidic residues.

The protein belongs to the UPF0229 family.

This Shewanella oneidensis (strain ATCC 700550 / JCM 31522 / CIP 106686 / LMG 19005 / NCIMB 14063 / MR-1) protein is UPF0229 protein SO_2883.